The following is a 372-amino-acid chain: Glutamine synthetase (372 aa).

The region spanning 26–105 (IIAEYVWIDS…VLAECWNNDG (80 aa)) is the GS beta-grasp domain. Residues 112 to 372 (HRHEAAKLFE…MTKEYERESL (261 aa)) form the GS catalytic domain.

Belongs to the glutamine synthetase family. In terms of assembly, homooctamer.

It is found in the cytoplasm. It carries out the reaction L-glutamate + NH4(+) + ATP = L-glutamine + ADP + phosphate + H(+). The sequence is that of Glutamine synthetase (GLN1) from Kluyveromyces lactis (strain ATCC 8585 / CBS 2359 / DSM 70799 / NBRC 1267 / NRRL Y-1140 / WM37) (Yeast).